The chain runs to 541 residues: Light-independent protochlorophyllide reductase subunit B (541 aa).

A [4Fe-4S] cluster-binding site is contributed by aspartate 36. Aspartate 287 functions as the Proton donor in the catalytic mechanism. 422–423 (GL) is a substrate binding site.

It belongs to the ChlB/BchB/BchZ family. Protochlorophyllide reductase is composed of three subunits; BchL, BchN and BchB. Forms a heterotetramer of two BchB and two BchN subunits. [4Fe-4S] cluster serves as cofactor.

It carries out the reaction chlorophyllide a + oxidized 2[4Fe-4S]-[ferredoxin] + 2 ADP + 2 phosphate = protochlorophyllide a + reduced 2[4Fe-4S]-[ferredoxin] + 2 ATP + 2 H2O. Its pathway is porphyrin-containing compound metabolism; bacteriochlorophyll biosynthesis (light-independent). In terms of biological role, component of the dark-operative protochlorophyllide reductase (DPOR) that uses Mg-ATP and reduced ferredoxin to reduce ring D of protochlorophyllide (Pchlide) to form chlorophyllide a (Chlide). This reaction is light-independent. The NB-protein (BchN-BchB) is the catalytic component of the complex. This Rhodopseudomonas palustris (strain HaA2) protein is Light-independent protochlorophyllide reductase subunit B.